Consider the following 185-residue polypeptide: MFRSQFTTLLGLFSGAWLPTGSGRPGAPATPVQSGTAINQSWTLDPLVPISALGSWEAFLGLQNKQQGTGELQGGGQRVAAGVPLPLAPQEVLQETCKALSFVQVISRPGCTSARVLNHLCFGRCSSFYIPSSDPTPVVFCNSCVPARKRWTSVTLWCGAGQLASPRRVRISTVLVQKCQCRPKL.

The N-terminal stretch at Met-1–Gly-23 is a signal peptide. Asn-39 carries an N-linked (GlcNAc...) asparagine glycan. 4 disulfides stabilise this stretch: Cys-97-Cys-144, Cys-111-Cys-158, Cys-121-Cys-179, and Cys-125-Cys-181. The region spanning Cys-97–Arg-182 is the CTCK domain.

Belongs to the DAN family. Expressed throughout the neural retina and in the photoreceptor nuclear layer. In the retina, widely expressed in inner nuclear layer, as well as in the ganglion cell layer.

The protein localises to the secreted. Antagonist of the extracellular signaling protein NODAL, which is required for correct left-right patterning during embryonic development. Antagonist of BMP4 signaling. Antagonist of TGF-beta signaling. Independently of its role in left-right axis establishment, plays a role during heart development, possibly through the regulation of TGF-beta/Nodal signaling pathway. Displays anti-angiogenic activity by inhibiting endothelial sprouting, migration, and proliferation. Once internalized by endothelial cells, may alter their redox and glycolytic balance. This chain is DAN domain family member 5 (Dand5), found in Mus musculus (Mouse).